We begin with the raw amino-acid sequence, 891 residues long: uncharacterized protein (891 aa).

This is an uncharacterized protein from Ictalurid herpesvirus 1 (strain Auburn) (IcHV-1).